The chain runs to 267 residues: MHPMLNIAIRAARKAGNHIAKSLENAEKIQTTQKGSNDFVTNVDKEAEAIIVSTIKSSYPEHCIIAEEGGLIEGKDKEVQWIIDPLDGTTNFVKGFPHFAVSIAVRFRGKTEVACVYDPMTNELFTAQRGAGAQLNNARIRVQPIKDLQGAVLATAFPFKQKQHSESFMKILSAMFVECADFRRTGSAALDLCYLAANRVDGYFELGLKPWDMAAGELIAREAGAIVTDFAGGTDYMQSGNIVASSPRGVKAILQHIRENGNSAILK.

Mg(2+) contacts are provided by E67, D84, and L86. E67 provides a ligand contact to substrate. Residues 86–89 (LDGT), R183, and D212 each bind substrate.

This sequence belongs to the inositol monophosphatase superfamily. Homodimer. The rRNA transcription and antitermination complex (rrnTAC) consists of RNA polymerase (RNAP), NusA, NusB, NusE (rpsJ), NusG, SubB, ribosomal protein S4, DNA and precursor rRNA; S4 is more flexible than other subunits. The cofactor is Mg(2+).

Its subcellular location is the cytoplasm. It carries out the reaction a myo-inositol phosphate + H2O = myo-inositol + phosphate. Part of the processive rRNA transcription and antitermination complex (rrnTAC). The complex forms an RNA-chaperone ring around the RNA exit tunnel of RNA polymerase (RNAP). It supports rapid transcription and antitermination of rRNA operons, cotranscriptional rRNA folding, and annealing of distal rRNA regions to allow correct ribosome biogenesis. This subunit may play a central role in organizing the structure. The protein is Nus factor SuhB of Vibrio cholerae serotype O1 (strain ATCC 39315 / El Tor Inaba N16961).